Reading from the N-terminus, the 321-residue chain is Lipoyl synthase (321 aa).

[4Fe-4S] cluster contacts are provided by Cys-68, Cys-73, Cys-79, Cys-94, Cys-98, Cys-101, and Ser-308. Residues 80 to 297 form the Radical SAM core domain; the sequence is FNHGTATFMI…KAEAIAMGFT (218 aa).

It belongs to the radical SAM superfamily. Lipoyl synthase family. The cofactor is [4Fe-4S] cluster.

Its subcellular location is the cytoplasm. It catalyses the reaction [[Fe-S] cluster scaffold protein carrying a second [4Fe-4S](2+) cluster] + N(6)-octanoyl-L-lysyl-[protein] + 2 oxidized [2Fe-2S]-[ferredoxin] + 2 S-adenosyl-L-methionine + 4 H(+) = [[Fe-S] cluster scaffold protein] + N(6)-[(R)-dihydrolipoyl]-L-lysyl-[protein] + 4 Fe(3+) + 2 hydrogen sulfide + 2 5'-deoxyadenosine + 2 L-methionine + 2 reduced [2Fe-2S]-[ferredoxin]. The protein operates within protein modification; protein lipoylation via endogenous pathway; protein N(6)-(lipoyl)lysine from octanoyl-[acyl-carrier-protein]: step 2/2. Functionally, catalyzes the radical-mediated insertion of two sulfur atoms into the C-6 and C-8 positions of the octanoyl moiety bound to the lipoyl domains of lipoate-dependent enzymes, thereby converting the octanoylated domains into lipoylated derivatives. In Pectobacterium carotovorum subsp. carotovorum (strain PC1), this protein is Lipoyl synthase.